The chain runs to 534 residues: Phosphoenolpyruvate carboxykinase (ATP) (534 aa).

Substrate contacts are provided by Arg59, Tyr200, and Lys206. Residues Lys206, His225, and 242–250 (GLSGTGKTT) contribute to the ATP site. Lys206 and His225 together coordinate Mn(2+). Residue Asp263 coordinates Mn(2+). Residues Glu291, Arg327, 443-444 (RI), and Thr449 each bind ATP. Arg327 contacts substrate.

It belongs to the phosphoenolpyruvate carboxykinase (ATP) family. It depends on Mn(2+) as a cofactor.

It localises to the cytoplasm. The enzyme catalyses oxaloacetate + ATP = phosphoenolpyruvate + ADP + CO2. The protein operates within carbohydrate biosynthesis; gluconeogenesis. In terms of biological role, involved in the gluconeogenesis. Catalyzes the conversion of oxaloacetate (OAA) to phosphoenolpyruvate (PEP) through direct phosphoryl transfer between the nucleoside triphosphate and OAA. This is Phosphoenolpyruvate carboxykinase (ATP) from Agathobacter rectalis (strain ATCC 33656 / DSM 3377 / JCM 17463 / KCTC 5835 / VPI 0990) (Eubacterium rectale).